We begin with the raw amino-acid sequence, 160 residues long: Troponin C, skeletal muscle (160 aa).

Thr2 carries the post-translational modification N-acetylthreonine. 4 consecutive EF-hand domains span residues 15 to 50, 51 to 86, 91 to 126, and 127 to 160; these read EMIA…LGQT, PTKE…QMKE, KSEE…SGEH, and VTEE…EGVQ. Ca(2+) contacts are provided by Asp28, Asp30, Asp34, Glu39, Asp64, Asp66, Ser68, Thr70, Glu75, Asp104, Asn106, Asp108, Tyr110, Glu115, Asp140, Asn142, Asp144, Arg146, and Glu151.

Belongs to the troponin C family. As to expression, fast skeletal muscle.

Its function is as follows. Troponin is the central regulatory protein of striated muscle contraction. Tn consists of three components: Tn-I which is the inhibitor of actomyosin ATPase, Tn-T which contains the binding site for tropomyosin and Tn-C. The binding of calcium to Tn-C abolishes the inhibitory action of Tn on actin filaments. In Mus musculus (Mouse), this protein is Troponin C, skeletal muscle (Tnnc2).